We begin with the raw amino-acid sequence, 288 residues long: Cytochrome b-c1 complex catalytic subunit, mitochondrial (288 aa).

The chain crosses the membrane as a helical span at residues 12-34; it reads SMVQKFIAGGVGVTGLTASYLLY. Residues 69 to 222 enclose the Cytochrome c domain; the sequence is ASIRRGFQVY…DLVEYEDGTP (154 aa). Residues C82, C85, and H86 each contribute to the heme c site. The segment covering 111–121 has biased composition (acidic residues); the sequence is EELEYDDEPDD. Residues 111–138 form a disordered region; sequence EELEYDDEPDDEGKPRKRPGKLADYIPG. The chain crosses the membrane as a helical span at residues 250-268; it reads WGLKALVVLSSLYLLSIWV.

The protein belongs to the cytochrome c family. In terms of assembly, component of the ubiquinol-cytochrome c oxidoreductase (cytochrome b-c1 complex, complex III, CIII), a multisubunit enzyme composed of 10 subunits. The complex is composed of 3 respiratory subunits cytochrome b (COB), cytochrome c1 (CYT1) and Rieske protein (RIP1), 2 core protein subunits COR1 and QCR2, and 5 low-molecular weight protein subunits QCR6, QCR7, QCR8, QCR9 and QCR10. The complex exists as an obligatory dimer and forms supercomplexes (SCs) in the inner mitochondrial membrane with a monomer or a dimer of cytochrome c oxidase (complex IV, CIV), resulting in 2 different assemblies (supercomplexes III(2)IV and III(2)IV(2)). Heme c is required as a cofactor.

The protein localises to the mitochondrion inner membrane. It catalyses the reaction a quinol + 2 Fe(III)-[cytochrome c](out) = a quinone + 2 Fe(II)-[cytochrome c](out) + 2 H(+)(out). Component of the ubiquinol-cytochrome c oxidoreductase, a multisubunit transmembrane complex that is part of the mitochondrial electron transport chain which drives oxidative phosphorylation. The complex plays an important role in the uptake of multiple carbon sources present in different host niches. The sequence is that of Cytochrome b-c1 complex catalytic subunit, mitochondrial from Candida albicans (strain SC5314 / ATCC MYA-2876) (Yeast).